Reading from the N-terminus, the 206-residue chain is MKRPVLIGITGGTGSGKSTVAKEIYNKFDEACIAMIEQDSYYKDQSSIPFEERCKKNYDHPDAFDNELLIDHLKNLVDLNVIEKPIYDFEAHNRKEETIKVEPRDIIILEGILVLQDPKVRELLDIKIYVDTDADVRIIRRLLRDINERGRTVDSVINQYLTVVRPMHMQFIEPSKRYADIIIPEGGHNRVAVDMMVANIKHLLQK.

11–18 serves as a coordination point for ATP; sequence GGTGSGKS.

It belongs to the uridine kinase family.

The protein resides in the cytoplasm. The catalysed reaction is uridine + ATP = UMP + ADP + H(+). The enzyme catalyses cytidine + ATP = CMP + ADP + H(+). It functions in the pathway pyrimidine metabolism; CTP biosynthesis via salvage pathway; CTP from cytidine: step 1/3. It participates in pyrimidine metabolism; UMP biosynthesis via salvage pathway; UMP from uridine: step 1/1. In Clostridium botulinum (strain Langeland / NCTC 10281 / Type F), this protein is Uridine kinase.